A 1375-amino-acid polypeptide reads, in one-letter code: Protein lingerer (1375 aa).

A disordered region spans residues 1 to 69; it reads MSTQTRSGGG…KAQPKATTEQ (69 aa). Positions 53-62 are enriched in basic and acidic residues; the sequence is SKTDKPEKAQ. Residues 84-124 enclose the UBA domain; it reads QINEKVLLLLTMTQRSEEEVCCALNECDYDLEAAANFLIEE. 2 stretches are compositionally biased toward low complexity: residues 142–161 and 173–184; these read ANNT…GNGN and SNRGGTRGSSDS. The disordered stretch occupies residues 142–286; the sequence is ANNTADGAAG…GSGRGGNANE (145 aa). The segment covering 185–204 has biased composition (basic and acidic residues); it reads RGWRGRETRENERNQRESRE. Residues 228-282 show a composition bias toward gly residues; that stretch reads RNGGGRSGPGGGGRGGGFVSRSGRGGGRMGGRTGGPRGDRGSGGPGGAYGSGRGG. The residue at position 321 (tyrosine 321) is a Phosphotyrosine. Position 324 is a phosphoserine (serine 324). Composition is skewed to polar residues over residues 374–387 and 395–412; these read VQQG…SSSG and ATLS…SAAV. Disordered stretches follow at residues 374–453 and 613–646; these read VQQG…ASPD and FEPL…QQQQ. Positions 426–441 are enriched in gly residues; it reads SGAGTGASAAAGGGAG. Low complexity-rich tracts occupy residues 442-453 and 629-646; these read STPSSFVSASPD and QQQQ…QQQQ. Serine 672 carries the phosphoserine modification. Threonine 673 is modified (phosphothreonine). Serine 674 carries the phosphoserine modification. Low complexity predominate over residues 750-767; sequence QGYGSYQPSSYQQQAGSG. Disordered regions lie at residues 750–801, 869–894, 987–1036, 1203–1234, and 1251–1277; these read QGYG…SGNA, SVST…GQTG, KNTS…GGSG, SKGG…DLTS, and EKQS…TSAQ. The segment covering 768-781 has biased composition (gly residues); the sequence is AQSGTGAVSGGGGT. Composition is skewed to low complexity over residues 789-801, 869-882, and 987-1008; these read GGSS…SGNA, SVST…NSGS, and KNTS…TGNA. The segment covering 1009 to 1036 has biased composition (gly residues); it reads SGQGAGASTGGVGSSSGAGGAGSGGGSG. Over residues 1265–1277 the composition is skewed to polar residues; sequence MPNTQTAGGTSAQ.

In terms of tissue distribution, at stage 11, expression is restricted to the neuroblasts, predominant in the central nervous system (CNS), including the brain and ventral nerve cord, and in the PNS. Later embryonic expression is seen in the gonads. Late third instar larvae show expression in the CNS, imaginal disks (including genital, eye-antennal, leg, wing and haltere disks), and gonads. In the larval brain, it is expressed in all of the glial cells and in clusters of neurons that projected contralaterally. In the larval ventral ganglion, it is expressed in subperineurial glia, peripheral exit glia, and a number of interneurons, but not in motor neurons. Isoform B is abundantly expressed in males and females. Isoform D is male specific and expressed at low levels.

Its subcellular location is the cytoplasm. Its function is as follows. Acts in the nervous system to mediate the control of copulatory organs during courtship. The polypeptide is Protein lingerer (Drosophila melanogaster (Fruit fly)).